The chain runs to 740 residues: Ion-translocating oxidoreductase complex subunit C (740 aa).

4Fe-4S ferredoxin-type domains lie at 369 to 397 and 407 to 436; these read GEPQ…QQLY and KATT…VQYF. 8 residues coordinate [4Fe-4S] cluster: Cys377, Cys380, Cys383, Cys387, Cys416, Cys419, Cys422, and Cys426. 3 disordered regions span residues 602–652, 664–685, and 695–714; these read KLEQ…DPRK, ARKL…PRKA, and KARK…QVDP. Over residues 605–615 the composition is skewed to low complexity; the sequence is QQQANAEPEQQ.

It belongs to the 4Fe4S bacterial-type ferredoxin family. RnfC subfamily. The complex is composed of six subunits: RsxA, RsxB, RsxC, RsxD, RsxE and RsxG. Requires [4Fe-4S] cluster as cofactor.

It is found in the cell inner membrane. Part of a membrane-bound complex that couples electron transfer with translocation of ions across the membrane. Required to maintain the reduced state of SoxR. In Escherichia coli O157:H7, this protein is Ion-translocating oxidoreductase complex subunit C.